The primary structure comprises 268 residues: Undecaprenyl-diphosphatase (268 aa).

Helical transmembrane passes span 3 to 23 (VFNL…EFIP), 46 to 66 (FEVL…SAKL), 84 to 104 (FGIL…HGFI), 107 to 127 (VLFE…FILL), 144 to 164 (YPLP…IPGV), 184 to 204 (AAEF…AYDL), 218 to 238 (LIGV…RYLL), and 248 to 268 (LFGW…LVWG).

It belongs to the UppP family.

It is found in the cell inner membrane. The enzyme catalyses di-trans,octa-cis-undecaprenyl diphosphate + H2O = di-trans,octa-cis-undecaprenyl phosphate + phosphate + H(+). Functionally, catalyzes the dephosphorylation of undecaprenyl diphosphate (UPP). Confers resistance to bacitracin. The chain is Undecaprenyl-diphosphatase from Brucella anthropi (strain ATCC 49188 / DSM 6882 / CCUG 24695 / JCM 21032 / LMG 3331 / NBRC 15819 / NCTC 12168 / Alc 37) (Ochrobactrum anthropi).